Reading from the N-terminus, the 240-residue chain is MSINDDISSDVMRIRDADWNKRSGSKVPSPGDVTLSNGAVEIDATYLYADMANSSRMAKELDRRVTAKILKSFLASSSRLISHFGGTIMSFDGDRVMGAFMGDAKNSSAIKCSFSIAYSVTQLIRPKFESKYDTVKNAGFKIRHATGVDTGTVFVVRGGIYGSNELISIGRAPNLAAKLSDLREGEYTTFATKSVYDRTNKLQKQRLDGSSDIWEKRDWDFCDENITIYRSSYWRKPGSN.

The Guanylate cyclase domain occupies 45–180 (TYLYADMANS…RAPNLAAKLS (136 aa)). Tyr48 is an a ribonucleoside 5'-triphosphate binding site. Mn(2+) is bound by residues Asp50 and Asp94. Residue Arg95 participates in a ribonucleoside 5'-triphosphate binding.

It belongs to the adenylyl cyclase class-4/guanylyl cyclase family. Pyrimidine cyclase subfamily. In terms of assembly, homodimer. Requires Mn(2+) as cofactor.

Its subcellular location is the cytoplasm. It catalyses the reaction UTP = 3',5'-cyclic UMP + diphosphate. Pycsar (pyrimidine cyclase system for antiphage resistance) provides immunity against bacteriophage. The pyrimidine cyclase (PycC) synthesizes cyclic nucleotides in response to infection; these serve as specific second messenger signals. The signals activate the adjacent effector, leading to bacterial cell death and abortive phage infection. A clade B Pycsar system. Its function is as follows. The pyrimidine cyclase gene of a two-gene Pycsar system, weakly generates cyclic UMP (cUMP) from UTP, has little to no activity on ATP, CTP or GTP. Expression of this and adjacent effector RsmPycTM (AC A0A1V0HUU2) probably confers resistance to bacteriophage. The genes are probably only expressed in response to bacteriophage infection. This is Uridylate cyclase from Rhodovulum sp. (strain MB263).